A 382-amino-acid polypeptide reads, in one-letter code: S-adenosylmethionine synthase (382 aa).

Residue Glu10 participates in Mg(2+) binding. Residue His16 coordinates ATP. Position 44 (Glu44) interacts with K(+). Glu57 and Gln100 together coordinate L-methionine. ATP is bound by residues 166–168, 234–237, Asp245, 251–252, Ala268, Lys272, and Lys276; these read DTK, SGRF, and RK. Residue Asp245 participates in L-methionine binding. Position 276 (Lys276) interacts with L-methionine.

This sequence belongs to the AdoMet synthase family. Mg(2+) serves as cofactor. The cofactor is K(+).

The catalysed reaction is L-methionine + ATP + H2O = S-adenosyl-L-methionine + phosphate + diphosphate. Its pathway is amino-acid biosynthesis; S-adenosyl-L-methionine biosynthesis; S-adenosyl-L-methionine from L-methionine: step 1/1. Functionally, catalyzes the formation of S-adenosylmethionine from methionine and ATP. The reaction comprises two steps that are both catalyzed by the same enzyme: formation of S-adenosylmethionine (AdoMet) and triphosphate, and subsequent hydrolysis of the triphosphate. This is S-adenosylmethionine synthase (sam1) from Schizosaccharomyces pombe (strain 972 / ATCC 24843) (Fission yeast).